The chain runs to 479 residues: MGNSDSLKAVWFRRDFRLHDHTALKHAIEAIEKHGGKWLAFFYLDPKTASVEPVHHDYFFQTVMQFKQMLKTNGGDLYIITGTIEGALSKLLQAFPEIDAVYANDDRVGDGRLRDEAAEHFLAKQSIPFYTFEDAYLTEPDQVLKKDGTPYKVFTPYYKAWAKERKRTPAVIKRDVLLGSVHKGTAPDREAETLFNNLIKKCSYDWSAIGEEHAIKRLQMFTKKRLSGYKANRDFPSITGTSRLSPYIKTGAVSSRSIYYHILNAEADSYSAETFLKELAWRDFYRMVHFYEPDCKDREIMEGYRELNWSHDQDDLTSWKRGETGFPIVDAGMRQLLNEGWMHNRLRMITASFLTKDLLIDWRLGERYFERMLIDYDPSSNIGGWQWAASVGTDAVPYFRIFNPVTQSKRFDENGTYIRTYIPELNHVPDHYIHEPWKMSEEEQVKYKCRLDEDYPLPIVDHSKQRKKALSFFKGDDEE.

Positions 6–137 (SLKAVWFRRD…PFYTFEDAYL (132 aa)) constitute a Photolyase/cryptochrome alpha/beta domain. Tyr229 serves as a coordination point for FAD. A DNA-binding site is contributed by Arg233. Residues 241 to 245 (TSRLS) and 278 to 285 (ELAWRDFY) each bind FAD. 2 interaction with DNA regions span residues 278–285 (ELAWRDFY) and 344–345 (NR). FAD is bound at residue 375–377 (DYD). Gln407 serves as a coordination point for DNA.

This sequence belongs to the DNA photolyase class-1 family. In terms of assembly, monomer. The cofactor is FAD. It depends on (6R)-5,10-methylene-5,6,7,8-tetrahydrofolate as a cofactor.

The enzyme catalyses cyclobutadipyrimidine (in DNA) = 2 pyrimidine residues (in DNA).. Functionally, involved in repair of UV radiation-induced DNA damage. Catalyzes the light-dependent monomerization (300-600 nm) of cyclobutyl pyrimidine dimers (in cis-syn configuration), which are formed between adjacent bases on the same DNA strand upon exposure to ultraviolet radiation. In Alkalihalophilus pseudofirmus (strain ATCC BAA-2126 / JCM 17055 / OF4) (Bacillus pseudofirmus), this protein is Deoxyribodipyrimidine photo-lyase (phr).